The chain runs to 151 residues: 6,7-dimethyl-8-ribityllumazine synthase (151 aa).

5-amino-6-(D-ribitylamino)uracil-binding positions include F15, 49-51 (AVE), and 73-75 (AVI). Residue 78–79 (ET) coordinates (2S)-2-hydroxy-3-oxobutyl phosphate. Residue H81 is the Proton donor of the active site. A 5-amino-6-(D-ribitylamino)uracil-binding site is contributed by F106. (2S)-2-hydroxy-3-oxobutyl phosphate is bound at residue R120.

This sequence belongs to the DMRL synthase family. As to quaternary structure, forms an icosahedral capsid composed of 60 subunits, arranged as a dodecamer of pentamers.

It catalyses the reaction (2S)-2-hydroxy-3-oxobutyl phosphate + 5-amino-6-(D-ribitylamino)uracil = 6,7-dimethyl-8-(1-D-ribityl)lumazine + phosphate + 2 H2O + H(+). Its pathway is cofactor biosynthesis; riboflavin biosynthesis; riboflavin from 2-hydroxy-3-oxobutyl phosphate and 5-amino-6-(D-ribitylamino)uracil: step 1/2. In terms of biological role, catalyzes the formation of 6,7-dimethyl-8-ribityllumazine by condensation of 5-amino-6-(D-ribitylamino)uracil with 3,4-dihydroxy-2-butanone 4-phosphate. This is the penultimate step in the biosynthesis of riboflavin. This Coxiella burnetii (strain CbuG_Q212) (Coxiella burnetii (strain Q212)) protein is 6,7-dimethyl-8-ribityllumazine synthase.